The chain runs to 255 residues: Microfibril-associated glycoprotein 4 (255 aa).

Positions 1 to 20 (MEALLVLPLLLLLSAGPCAP) are cleaved as a signal peptide. Residues 26–28 (RGD) carry the Cell attachment site motif. In terms of domain architecture, Fibrinogen C-terminal spans 32 to 255 (KSCLQLPLDC…KRTEMKIRRA (224 aa)). Residues Asn87 and Asn137 are each glycosylated (N-linked (GlcNAc...) asparagine).

In terms of assembly, homodimer. Can also form higher oligomers. Interacts with FBN1, FBN2 and LOX. Interacts with COL1A1 in a Ca (2+)-dependent manner. Interacts with ELN in a Ca (2+)-dependent manner; this interaction promotes ELN self-assembly.

It is found in the secreted. The protein resides in the extracellular space. It localises to the extracellular matrix. In terms of biological role, could be involved in calcium-dependent cell adhesion or intercellular interactions. May contribute to the elastic fiber assembly and/or maintenance. The protein is Microfibril-associated glycoprotein 4 (MFAP4) of Bos taurus (Bovine).